A 157-amino-acid polypeptide reads, in one-letter code: Globin (157 aa).

At Gly1 the chain carries N-acetylglycine. The 148-residue stretch at Ser8 to Lys155 folds into the Globin domain. Positions 70 and 102 each coordinate heme b.

The protein belongs to the globin family. As to quaternary structure, monomer.

In Nerita albicilla (Ox-palate nerite), this protein is Globin.